The primary structure comprises 525 residues: Protein-serine O-palmitoleoyltransferase porcupine (525 aa).

Helical transmembrane passes span 83–103 (VMQY…LCLL), 125–145 (LIIL…LAAV), 159–179 (GAQV…LLIW), 220–240 (FAYL…WVSF), 260–280 (LLPN…VAPA), 301–318 (VRSS…LLVA), 395–415 (SLLH…AFLA), 467–487 (NLAF…VLLG), and 505–525 (QAGY…LFIS). H398 is an active-site residue.

It belongs to the membrane-bound acyltransferase family. Porcupine subfamily. In terms of assembly, interacts with wg and Wnt5.

It localises to the endoplasmic reticulum membrane. It carries out the reaction [Wnt protein]-L-serine + (9Z)-hexadecenoyl-CoA = [Wnt protein]-O-(9Z)-hexadecenoyl-L-serine + CoA. Protein-serine O-palmitoleoyltransferase that acts as a key regulator of the Wnt signaling pathway by mediating the attachment of palmitoleate, a 16-carbon monounsaturated fatty acid (C16:1(9Z)), to Wnt proteins. Serine palmitoleoylation of Wnt proteins is required for efficient binding to frizzled receptors. Also facilitates the glycosylation of Wnt family members, including wg and Wnt5. The cotranslational disulfide bond formation of wg competes with the N-glycosylation. Porc stimulates the post-translational N-glycosylation by anchoring wg at the ER membrane, probably through acylation. In Drosophila melanogaster (Fruit fly), this protein is Protein-serine O-palmitoleoyltransferase porcupine.